A 448-amino-acid chain; its full sequence is Protein giant (448 aa).

Disordered stretches follow at residues 23 to 47 (MHHH…LPVQ), 83 to 134 (QQHQ…ASPT), 238 to 259 (VEAT…RPFK), and 298 to 363 (IRSS…TSSS). The segment covering 30-47 (HHQQQPLHHLPHSQLPVQ) has biased composition (low complexity). The segment covering 100–112 (DLSRRCDSVETPR) has biased composition (basic and acidic residues). Positions 115 to 134 (PSPYQTSYSYGSGSPSASPT) are enriched in low complexity. The span at 298–310 (IRSSNGGSRTVTN) shows a compositional bias: polar residues. Low complexity predominate over residues 318 to 333 (SRSGSVNEGSSSNNNS). One can recognise a bZIP domain in the interval 384–447 (DAAYYERRRK…AAFTSAKVTT (64 aa)). Positions 390-406 (RRRKNNAAAKKSRDRRR) are basic motif. The interval 407–414 (IKEDEIAI) is leucine-zipper.

The protein belongs to the bZIP family. In terms of assembly, homodimer or heterodimer. Post-translationally, phosphorylated at multiple sites.

Its subcellular location is the nucleus. In terms of biological role, represses the expression of both the krueppel and knirps segmentation gap genes. Binds, in vitro, to the krueppel regulatory elements CD1 and CD2. It is required in the early embryo for the development of portions of the head and abdomen. The protein is Protein giant (gt) of Drosophila melanogaster (Fruit fly).